A 1198-amino-acid polypeptide reads, in one-letter code: Fibronectin type-III domain-containing protein 3A (1198 aa).

The interval 160–221 (YGDVDAHSTH…PSPINEHNGL (62 aa)) is disordered. Basic and acidic residues predominate over residues 163–201 (VDAHSTHGRSNFRDERSSKTYERLQKKLKDRQGTQKDKM). A compositionally biased stretch (low complexity) spans 202-214 (SSPPSSPQKCPSP). Phosphoserine is present on residues S203, S207, and S213. 9 consecutive Fibronectin type-III domains span residues 268–369 (NIVK…TLSC), 373–465 (IPNP…TSGC), 469–562 (MPAS…TCPD), 566–660 (IPVK…TPAV), 664–757 (PCLP…TAPG), 761–851 (QCKP…TPPS), 861–950 (EISD…TKPL), 951–1045 (PPDP…TPKS), and 1046–1151 (VPAA…TEPP). K384 is modified (N6-acetyllysine). Residues 1177 to 1197 (ILVLFAFFSILIAFIIQYFVI) form a helical membrane-spanning segment.

It belongs to the FNDC3 family. Expressed in the odontoblast and nerves in the dental pulp. Also expressed in trachea and to a lesser extent in the brain, liver, lung and kidney.

It is found in the golgi apparatus membrane. Functionally, mediates spermatid-Sertoli adhesion during spermatogenesis. The chain is Fibronectin type-III domain-containing protein 3A (FNDC3A) from Homo sapiens (Human).